The chain runs to 200 residues: Pyridoxal 5'-phosphate synthase subunit PdxT (200 aa).

52–54 (GES) is an L-glutamine binding site. Cys84 (nucleophile) is an active-site residue. Residues Arg115 and 143 to 144 (IR) contribute to the L-glutamine site. Catalysis depends on charge relay system residues His179 and Glu181.

It belongs to the glutaminase PdxT/SNO family. In the presence of PdxS, forms a dodecamer of heterodimers. Only shows activity in the heterodimer.

The enzyme catalyses aldehydo-D-ribose 5-phosphate + D-glyceraldehyde 3-phosphate + L-glutamine = pyridoxal 5'-phosphate + L-glutamate + phosphate + 3 H2O + H(+). The catalysed reaction is L-glutamine + H2O = L-glutamate + NH4(+). It functions in the pathway cofactor biosynthesis; pyridoxal 5'-phosphate biosynthesis. Functionally, catalyzes the hydrolysis of glutamine to glutamate and ammonia as part of the biosynthesis of pyridoxal 5'-phosphate. The resulting ammonia molecule is channeled to the active site of PdxS. The sequence is that of Pyridoxal 5'-phosphate synthase subunit PdxT from Methanosarcina barkeri (strain Fusaro / DSM 804).